A 469-amino-acid chain; its full sequence is Uronate isomerase (469 aa).

This sequence belongs to the metallo-dependent hydrolases superfamily. Uronate isomerase family.

It carries out the reaction D-glucuronate = D-fructuronate. The catalysed reaction is aldehydo-D-galacturonate = keto-D-tagaturonate. Its pathway is carbohydrate metabolism; pentose and glucuronate interconversion. The chain is Uronate isomerase from Edwardsiella ictaluri (strain 93-146).